The following is a 133-amino-acid chain: Binder of sperm protein homolog 1 (133 aa).

Residues 1-20 form the signal peptide; it reads MAQPLDFLLVSICLFHSLFS. Fibronectin type-II domains are found at residues 40-84 and 85-133; these read TEDG…YCAL and SDYA…YCIE. Intrachain disulfides connect Cys-45–Cys-69, Cys-59–Cys-82, Cys-90–Cys-116, and Cys-104–Cys-131. The N-linked (GlcNAc...) asparagine glycan is linked to Asn-72.

This sequence belongs to the seminal plasma protein family. Expressed only in the epididymis.

The protein resides in the secreted. Its function is as follows. Binds sperm in vitro and promotes sperm capacitation. Specifically promotes capacitation induced by high density lipoproteins (HDLs). Also binds heparin, phospholipid liposomes, and weakly to gelatin. Does not bind chondroitin sulfate B. The protein is Binder of sperm protein homolog 1 (Bsph1) of Mus musculus (Mouse).